The sequence spans 1402 residues: DNA-directed RNA polymerase subunit beta' (1402 aa).

Residues cysteine 71, cysteine 73, cysteine 86, and cysteine 89 each contribute to the Zn(2+) site. Mg(2+)-binding residues include aspartate 462, aspartate 464, and aspartate 466. Zn(2+) is bound by residues cysteine 811, cysteine 885, cysteine 892, and cysteine 895.

It belongs to the RNA polymerase beta' chain family. As to quaternary structure, the RNAP catalytic core consists of 2 alpha, 1 beta, 1 beta' and 1 omega subunit. When a sigma factor is associated with the core the holoenzyme is formed, which can initiate transcription. The cofactor is Mg(2+). Zn(2+) is required as a cofactor.

It carries out the reaction RNA(n) + a ribonucleoside 5'-triphosphate = RNA(n+1) + diphosphate. In terms of biological role, DNA-dependent RNA polymerase catalyzes the transcription of DNA into RNA using the four ribonucleoside triphosphates as substrates. This chain is DNA-directed RNA polymerase subunit beta', found in Rhizobium etli (strain ATCC 51251 / DSM 11541 / JCM 21823 / NBRC 15573 / CFN 42).